A 457-amino-acid polypeptide reads, in one-letter code: MALWGGRFSQESSALFKLFNDSLPVDYRLVEQDIVGSIAWAGAITQVGILSEAECQQLQQALKELLGEVEEKPELILASGAEDIHSFVELSLIAKVGDLGKKLHTGRSRNDQVATDLKLWCKKEGQQQLLLLKALRQALLELAERELDAVMPGYTHLQRAQPVAFGHWCLAYVEMFERDISRLEDALKRADTCPLGTGALAGTAYPMDRYKLAESLGFASPTLNSLDTVSDRDHVVEICSDASISMMHLSRMAEDLIFFNSGEAGFIDLDDEVTSGSSLMPQKKNPDALELIRGKTGRVYGSLIGILTTMKALPLAYNKDMQEDKEGLFDVMDSWAICLEMAALVLSGLKVNRENTLSAAQQGYANSTELADYLVAKGMPFREAHHVVGEVVVKAIAQKKPLEDFELKDLQSFSEIITSDVYDCLTIESCLEKREALGGTALPQVRAALATKLAASE.

The protein belongs to the lyase 1 family. Argininosuccinate lyase subfamily.

It is found in the cytoplasm. It catalyses the reaction 2-(N(omega)-L-arginino)succinate = fumarate + L-arginine. The protein operates within amino-acid biosynthesis; L-arginine biosynthesis; L-arginine from L-ornithine and carbamoyl phosphate: step 3/3. This Shewanella sediminis (strain HAW-EB3) protein is Argininosuccinate lyase.